A 1432-amino-acid chain; its full sequence is MDTIGLDETTTIEINNNSNNKHSSYSSSSSNNNSNNLIISKIPNKIIDSNNNKNNNNNKNNNNNNNKNNYYNINKSSKMDMDYLLDCVQKTHGLIKDLTDSMLISNDQEERKQFQKQLNESNNYLNELLSKLSYIKNNNNINNNNNNGNINSNNGTSFGEIKSIPLMSNETGFTNNKITNNFNYSENKNNNNNNNNGQEQHELFSTSNKIENNNNNNNNKINNENNNEKNKNNNNGQHIIPKIYISDHEMAPNSEFQNIDSISPSSQLICGESRLTPVSERNELTSPASSLPSLPSLPSSMPKENKENKEPINQQEEEEEEEEEDEQKKEEENNLVKMTTVQVENTQEKIPLAKSATISTTNKTIEIEEQEKGMDSEKLKKTIKSSSSSSSNLFNDFPKPFIPFVQSNYNTEERNEVLQIVKLIHYEYGVQIKDKTGQLDNYMYNINFNPPPQYMCNSNDINSNNINSNINNNNNNMSNNLKKKLLIISNEKRNKMGPQIQRSPEETYLSNHFDEEELSNYFSHSFMSPKIVKSPSSSNLNKINQNNQNNNNNNIINNNNNNNNQNNTTTNNKNKSNNEKNNDNNTVFNNNTTTTNNNNNNNNNNSSEKNKVIVFEKKEPGQFIFKKEKVAKLSTSLSYSNLSSSSSNGGTAEDEEYDRYYDSFHCVELVDEDLLVYDNEDIYFNDEVDQNKSPLISPSLSKSNTTTTTTTTTTTTTATYANVNANAIATIGSSRKINNTLSPNMNNNNNNNNNNNNNNNNNNNNNNNNNNNNNNNSNNTSPTLTTQENNGISNGSGNGGRKIHYRSLSHGIIKTPFTNNKLKTLQIFVPTEPYTCRLEITIEENVTVERLLIEVIDLCIKERRKIQYHKRQKLQIQQLQLLQQPIITTTTTVAVQSNNNNNSSNNNNNNNNNNNNNMTSPINQSQSLTSSTTSSNISSSSSSNAFSPPTVSVSNQLISNNKNGNDFESLTFPFLIYTNHRDFILKKSDENGEIDQTLQPIIRTTEIKKLKTDCFSLVINPKAIRDTTHHPQIFRVHIIHSSNNINSNSNNNNNNNNNNNNNNNNNNNNYNNNNNNNCNNGIVKSISFSNIGEVDQSSSSIAPSSSTTAATAATSSTTKDSVAVVYKSSSTLASIKASICKKENLELNLCVFMTMSNEVIQNEKITLVELNLPSVKLVYDQIKPIQKSITPFQSEGVVGNAPRPITKLLGPIFFFTPDNICEIKQYVVSKIGKLGVKKDRYMEISKDKIMYSQFDYLPSSSVSQNGFHNNNNNNNKEYYGGGVGGGGGFTNYNNFSNANLNNNNNNSNFGNGNGNGGINGNNGNNSGSNNKENGGTGAGIGGGGGLQLPNNNNNNNTTPLKNNKFFRSFSSAVIKTPYQLINDISGVGIIINKPNSFYLKCNNKNSEYSSTDADEIVAKIQFIIRLKKENLI.

Disordered stretches follow at residues 1-72 (MDTI…NYYN), 208-237 (NKIENNNNNNNNKINNENNNEKNKNNNNGQ), 280-335 (ERNE…ENNL), 531-607 (IVKS…NNSS), 690-712 (QNKSPLISPSLSKSNTTTTTTTT), 738-801 (NNTL…NGGR), 896-950 (QSNN…SPPT), 1044-1076 (NINSNSNNNNNNNNNNNNNNNNNNNNYNNNNNN), and 1303-1359 (NNNN…NTTP). Low complexity-rich tracts occupy residues 14-72 (INNN…NYYN), 208-225 (NKIENNNNNNNNKINNEN), and 284-300 (LTSPASSLPSLPSLPSS). Residues 315 to 325 (QEEEEEEEEED) are compositionally biased toward acidic residues. Composition is skewed to low complexity over residues 536 to 575 (SSSNLNKINQNNQNNNNNNIINNNNNNNNQNNTTTNNKNK), 583 to 607 (DNNTVFNNNTTTTNNNNNNNNNNSS), 691 to 712 (NKSPLISPSLSKSNTTTTTTTT), 744 to 779 (NMNNNNNNNNNNNNNNNNNNNNNNNNNNNNNNNSNN), and 896 to 944 (QSNN…SSSN). Residues 1311–1320 (NGNGNGGING) are compositionally biased toward gly residues. A compositionally biased stretch (low complexity) spans 1321–1333 (NNGNNSGSNNKEN). Positions 1334–1346 (GGTGAGIGGGGGL) are enriched in gly residues. Over residues 1347–1359 (QLPNNNNNNNTTP) the composition is skewed to low complexity.

This is an uncharacterized protein from Dictyostelium discoideum (Social amoeba).